Here is a 628-residue protein sequence, read N- to C-terminus: Protein SDS23 (628 aa).

Residues 1-126 (MVNPPQPRQM…NKSSSQSIAP (126 aa)) are disordered. Polar residues predominate over residues 15–24 (RLSTSTSSGP). Composition is skewed to low complexity over residues 40 to 71 (QLQH…PGST) and 109 to 123 (SRHA…SSQS). 2 consecutive CBS domains span residues 258–319 (LHPK…RFPS) and 334–392 (GSSN…SHLL). The tract at residues 551–609 (GRRTDPQAARNQRRRSSTSTTRSSIDSALSAEGILPSGSAIIGSSNAANTGRRGSVEVS) is disordered. A compositionally biased stretch (low complexity) spans 587–599 (SGSAIIGSSNAAN).

This sequence belongs to the SDS23 family.

It localises to the cytoplasm. Its subcellular location is the nucleus. In terms of biological role, involved in DNA replication and cell separation. The chain is Protein SDS23 (SDS24) from Candida albicans (strain SC5314 / ATCC MYA-2876) (Yeast).